Here is a 221-residue protein sequence, read N- to C-terminus: Secreted protein BARF1 (221 aa).

Residues Met-1–Ala-20 form the signal peptide. Ig-like domains are found at residues Val-21–Ser-120 and Pro-124–Ser-220. Asn-95 is a glycosylation site (N-linked (GlcNAc...) asparagine; by host). Cysteines 146 and 201 form a disulfide.

In terms of assembly, homohexamer. Interacts with human CSF1. Post-translationally, phosphorylated on serine and threonine by host.

Its subcellular location is the secreted. Its function is as follows. Plays diverse functions in immunomodulation and oncogenicity, maybe by acting as a functional receptor for human CSF1. May inhibit interferon secretion from mononuclear cells. Exhibits oncogenic activity in vitro. In Epstein-Barr virus (strain B95-8) (HHV-4), this protein is Secreted protein BARF1.